Consider the following 70-residue polypeptide: Cold shock-like protein CspG (70 aa).

In terms of domain architecture, CSD spans 7 to 67 (GLVKWFNADK…GQRGPAAANV (61 aa)).

Its subcellular location is the cytoplasm. The protein is Cold shock-like protein CspG (cspG) of Escherichia coli O157:H7.